The sequence spans 204 residues: uncharacterized protein (204 aa).

This is an uncharacterized protein from Methanocaldococcus jannaschii (strain ATCC 43067 / DSM 2661 / JAL-1 / JCM 10045 / NBRC 100440) (Methanococcus jannaschii).